The following is a 277-amino-acid chain: Shikimate dehydrogenase (NADP(+)) (277 aa).

Shikimate is bound by residues 15–17 (SLS) and threonine 62. The active-site Proton acceptor is the lysine 66. Shikimate-binding residues include asparagine 87 and aspartate 102. Residues 127–131 (GSGGA), 151–156 (NRTVDK), and isoleucine 219 contribute to the NADP(+) site. Tyrosine 221 serves as a coordination point for shikimate. An NADP(+)-binding site is contributed by glycine 242.

This sequence belongs to the shikimate dehydrogenase family. Homodimer.

The catalysed reaction is shikimate + NADP(+) = 3-dehydroshikimate + NADPH + H(+). It participates in metabolic intermediate biosynthesis; chorismate biosynthesis; chorismate from D-erythrose 4-phosphate and phosphoenolpyruvate: step 4/7. Its function is as follows. Involved in the biosynthesis of the chorismate, which leads to the biosynthesis of aromatic amino acids. Catalyzes the reversible NADPH linked reduction of 3-dehydroshikimate (DHSA) to yield shikimate (SA). In Bacillus cereus (strain B4264), this protein is Shikimate dehydrogenase (NADP(+)).